The primary structure comprises 147 residues: Deoxyuridine 5'-triphosphate nucleotidohydrolase (147 aa).

Positions 69, 82, 85, 88, 93, 137, 142, and 143 each coordinate dUMP.

Belongs to the dUTPase family. As to quaternary structure, homotrimer. The cofactor is Mg(2+).

The enzyme catalyses dUTP + H2O = dUMP + diphosphate + H(+). Its pathway is pyrimidine metabolism; dUMP biosynthesis; dUMP from dCTP (dUTP route): step 2/2. Its function is as follows. Involved in nucleotide metabolism via production of dUMP, the immediate precursor of thymidine nucleotides, and decreases the intracellular concentration of dUTP so that uracil cannot be incorporated into DNA. Shows a significant activity against dITP, another potentially mutagenic nucleotide. The chain is Deoxyuridine 5'-triphosphate nucleotidohydrolase from Saccharomyces cerevisiae (strain ATCC 204508 / S288c) (Baker's yeast).